Reading from the N-terminus, the 454-residue chain is uncharacterized protein (454 aa).

This is an uncharacterized protein from Rickettsia prowazekii (strain Madrid E).